The following is a 153-amino-acid chain: Histone H2B.6 (153 aa).

2 stretches are compositionally biased toward basic and acidic residues: residues M1–P28 and E36–K53. Residues M1–K60 are disordered. An N6-acetyllysine mark is found at K7 and K37. K149 is covalently cross-linked (Glycyl lysine isopeptide (Lys-Gly) (interchain with G-Cter in ubiquitin)).

Belongs to the histone H2B family. The nucleosome is a histone octamer containing two molecules each of H2A, H2B, H3 and H4 assembled in one H3-H4 heterotetramer and two H2A-H2B heterodimers. The octamer wraps approximately 147 bp of DNA. Post-translationally, can be acetylated to form H2BK6ac and H2BK33ac. Monoubiquitinated by BRE1 to form H2BK143ub1 and deubiquitinated by UBP26. Required for heterochromatic histone H3 di- and trimethylation at H3K4me. May give a specific tag for epigenetic transcriptional activation.

It localises to the nucleus. The protein localises to the chromosome. Its function is as follows. Core component of nucleosome. Nucleosomes wrap and compact DNA into chromatin, limiting DNA accessibility to the cellular machineries which require DNA as a template. Histones thereby play a central role in transcription regulation, DNA repair, DNA replication and chromosomal stability. DNA accessibility is regulated via a complex set of post-translational modifications of histones, also called histone code, and nucleosome remodeling. The sequence is that of Histone H2B.6 (H2B.6) from Oryza sativa subsp. indica (Rice).